The chain runs to 398 residues: Enoate reductase 1 (398 aa).

T37 and H191 together coordinate FMN. H191 and N194 together coordinate substrate. Residue Y196 is the Proton donor of the active site. FMN contacts are provided by R243 and R348. Y375 contacts substrate.

This sequence belongs to the NADH:flavin oxidoreductase/NADH oxidase family. In terms of assembly, homodimer or heterodimer. Requires FMN as cofactor.

The enzyme catalyses butanoate + NAD(+) = (2E)-2-butenoate + NADH + H(+). In terms of biological role, enoate reductase with broad substrate specificity for different alpha,beta-unsaturated carbonyl compounds. Prefers NADPH over NADH as cofactor. This Kluyveromyces lactis (strain ATCC 8585 / CBS 2359 / DSM 70799 / NBRC 1267 / NRRL Y-1140 / WM37) (Yeast) protein is Enoate reductase 1 (KYE1).